Here is a 137-residue protein sequence, read N- to C-terminus: NADH dehydrogenase [ubiquinone] 1 beta subcomplex subunit 7 (137 aa).

Residue G2 is the site of N-myristoyl glycine attachment. In terms of domain architecture, CHCH spans 56–98 (RDYCAHYLIRLLKCKRDSFPNFLACKHEQHDWDYCEHLDYVKR). The Cx9C motif 1 signature appears at 59–69 (CAHYLIRLLKC). 2 disulfide bridges follow: C59–C90 and C69–C80. S73 bears the Phosphoserine mark. The Cx9C motif 2 signature appears at 80 to 90 (CKHEQHDWDYC).

It belongs to the complex I NDUFB7 subunit family. In terms of assembly, complex I is composed of 45 different subunits.

Its subcellular location is the mitochondrion inner membrane. The protein resides in the mitochondrion intermembrane space. Accessory subunit of the mitochondrial membrane respiratory chain NADH dehydrogenase (Complex I), that is believed not to be involved in catalysis. Complex I functions in the transfer of electrons from NADH to the respiratory chain. The immediate electron acceptor for the enzyme is believed to be ubiquinone. This Mus musculus (Mouse) protein is NADH dehydrogenase [ubiquinone] 1 beta subcomplex subunit 7 (Ndufb7).